Reading from the N-terminus, the 159-residue chain is Eukaryotic translation initiation factor 5A-2 (159 aa).

Over residues 1–10 the composition is skewed to basic and acidic residues; it reads MSDEEHHFEP. The interval 1 to 21 is disordered; it reads MSDEEHHFEPAADAGASKTYP. At lysine 52 the chain carries Hypusine.

Belongs to the eIF-5A family. Post-translationally, lys-52 undergoes hypusination, a unique post-translational modification that consists in the addition of a butylamino group from spermidine to lysine side chain, leading to the formation of the unusual amino acid hypusine. eIF-5As are the only known proteins to undergo this modification, which is essential for their function.

Functionally, translation factor that promotes translation elongation and termination, particularly upon ribosome stalling at specific amino acid sequence contexts. Binds between the exit (E) and peptidyl (P) site of the ribosome and promotes rescue of stalled ribosome: specifically required for efficient translation of polyproline-containing peptides as well as other motifs that stall the ribosome. Acts as a ribosome quality control (RQC) cofactor by joining the RQC complex to facilitate peptidyl transfer during CAT tailing step. In Medicago sativa (Alfalfa), this protein is Eukaryotic translation initiation factor 5A-2.